Here is a 1516-residue protein sequence, read N- to C-terminus: Myosin-52 (1516 aa).

Residues 7–62 (YKGLQCWIPDEQSQWIPGSIKDCRVEGEKAFLTVQDENENETVITVKPDDLNYEGR) enclose the Myosin N-terminal SH3-like domain. One can recognise a Myosin motor domain in the interval 73-766 (SDADDLTDLS…VTPLLESARD (694 aa)). Residue 167 to 174 (GESGAGKT) participates in ATP binding. An actin-binding region spans residues 647 to 669 (LVSLMSTINETNAHYIRCIKPNE). IQ domains lie at 793–813 (RKRV…RHTE), 818–838 (SSNI…KEFI), 840–865 (TKNS…EKTK), 866–886 (HDAT…KHYK), and 888–917 (LQYY…ESTK). The stretch at 926–1034 (YRLESRLFEI…LKSQLKNYDM (109 aa)) forms a coiled coil. Residues serine 1065 and serine 1072 each carry the phosphoserine modification. The region spanning 1163–1431 (ERYCVHTLEY…SELSKNIVAE (269 aa)) is the Dilute domain.

The protein belongs to the TRAFAC class myosin-kinesin ATPase superfamily. Myosin family.

It localises to the cytoplasm. In terms of biological role, involved in cell wall deposition where it has a role in the localization of mok1. The sequence is that of Myosin-52 (myo52) from Schizosaccharomyces pombe (strain 972 / ATCC 24843) (Fission yeast).